The sequence spans 210 residues: Large ribosomal subunit protein uL3 (210 aa).

The segment at 122 to 155 (NQKRNNFGRGPMSHGSKNHRAPGSIGAGTTPGRV) is disordered.

It belongs to the universal ribosomal protein uL3 family. In terms of assembly, part of the 50S ribosomal subunit. Forms a cluster with proteins L14 and L19.

In terms of biological role, one of the primary rRNA binding proteins, it binds directly near the 3'-end of the 23S rRNA, where it nucleates assembly of the 50S subunit. This Nostoc punctiforme (strain ATCC 29133 / PCC 73102) protein is Large ribosomal subunit protein uL3.